Consider the following 116-residue polypeptide: Large ribosomal subunit protein bL17 (116 aa).

This sequence belongs to the bacterial ribosomal protein bL17 family. Part of the 50S ribosomal subunit. Contacts protein L32.

This Thermosynechococcus vestitus (strain NIES-2133 / IAM M-273 / BP-1) protein is Large ribosomal subunit protein bL17.